A 239-amino-acid polypeptide reads, in one-letter code: DNA repair protein RecO (239 aa).

It belongs to the RecO family.

Functionally, involved in DNA repair and RecF pathway recombination. This chain is DNA repair protein RecO, found in Cereibacter sphaeroides (strain ATCC 17029 / ATH 2.4.9) (Rhodobacter sphaeroides).